A 142-amino-acid polypeptide reads, in one-letter code: Translation initiation factor 2 subunit beta (142 aa).

It belongs to the eIF-2-beta/eIF-5 family. In terms of assembly, heterotrimer composed of an alpha, a beta and a gamma chain.

Functionally, eIF-2 functions in the early steps of protein synthesis by forming a ternary complex with GTP and initiator tRNA. This chain is Translation initiation factor 2 subunit beta, found in Thermococcus gammatolerans (strain DSM 15229 / JCM 11827 / EJ3).